The sequence spans 138 residues: Translation initiation factor 2 subunit beta (138 aa).

It belongs to the eIF-2-beta/eIF-5 family. Heterotrimer composed of an alpha, a beta and a gamma chain.

In terms of biological role, eIF-2 functions in the early steps of protein synthesis by forming a ternary complex with GTP and initiator tRNA. The chain is Translation initiation factor 2 subunit beta from Methanopyrus kandleri (strain AV19 / DSM 6324 / JCM 9639 / NBRC 100938).